We begin with the raw amino-acid sequence, 358 residues long: DNA polymerase IV (358 aa).

The UmuC domain occupies isoleucine 6–glycine 187. Mg(2+) contacts are provided by aspartate 10 and aspartate 105. Glutamate 106 is an active-site residue.

The protein belongs to the DNA polymerase type-Y family. As to quaternary structure, monomer. The cofactor is Mg(2+).

Its subcellular location is the cytoplasm. It catalyses the reaction DNA(n) + a 2'-deoxyribonucleoside 5'-triphosphate = DNA(n+1) + diphosphate. In terms of biological role, poorly processive, error-prone DNA polymerase involved in untargeted mutagenesis. Copies undamaged DNA at stalled replication forks, which arise in vivo from mismatched or misaligned primer ends. These misaligned primers can be extended by PolIV. Exhibits no 3'-5' exonuclease (proofreading) activity. May be involved in translesional synthesis, in conjunction with the beta clamp from PolIII. The chain is DNA polymerase IV from Staphylococcus haemolyticus (strain JCSC1435).